A 472-amino-acid chain; its full sequence is 3-isopropylmalate dehydratase large subunit (472 aa).

Residues 61-80 are disordered; that stretch reads TPDHNVPTTQKERASGVEGI. Residues cysteine 353, cysteine 414, and cysteine 417 each coordinate [4Fe-4S] cluster.

Belongs to the aconitase/IPM isomerase family. LeuC type 1 subfamily. As to quaternary structure, heterodimer of LeuC and LeuD. It depends on [4Fe-4S] cluster as a cofactor.

It catalyses the reaction (2R,3S)-3-isopropylmalate = (2S)-2-isopropylmalate. It participates in amino-acid biosynthesis; L-leucine biosynthesis; L-leucine from 3-methyl-2-oxobutanoate: step 2/4. In terms of biological role, catalyzes the isomerization between 2-isopropylmalate and 3-isopropylmalate, via the formation of 2-isopropylmaleate. The sequence is that of 3-isopropylmalate dehydratase large subunit from Saccharophagus degradans (strain 2-40 / ATCC 43961 / DSM 17024).